The chain runs to 785 residues: Putative lipase C4A8.10 (785 aa).

2 disordered regions span residues 29-99 and 115-140; these read HSAT…SSDF and NTNAINIPEQTRGVSHTSSSPSVGTS. A compositionally biased stretch (low complexity) spans 32–41; it reads TSSTTVPPTV. A compositionally biased stretch (basic and acidic residues) spans 47–58; it reads TKKESGSIEDRA. The span at 63–86 shows a compositional bias: polar residues; the sequence is MTISSGENISKQISENNSSTNPKH. Low complexity-rich tracts occupy residues 89–99 and 127–140; these read SESSPLLSSDF and GVSHTSSSPSVGTS. Ser-390 acts as the Charge relay system in catalysis.

It belongs to the putative lipase ROG1 family.

The sequence is that of Putative lipase C4A8.10 from Schizosaccharomyces pombe (strain 972 / ATCC 24843) (Fission yeast).